The primary structure comprises 287 residues: Bifunctional protein FolD (287 aa).

NADP(+) contacts are provided by residues 165 to 167 (GRG), Thr-190, and Ile-231.

This sequence belongs to the tetrahydrofolate dehydrogenase/cyclohydrolase family. In terms of assembly, homodimer.

It carries out the reaction (6R)-5,10-methylene-5,6,7,8-tetrahydrofolate + NADP(+) = (6R)-5,10-methenyltetrahydrofolate + NADPH. It catalyses the reaction (6R)-5,10-methenyltetrahydrofolate + H2O = (6R)-10-formyltetrahydrofolate + H(+). It participates in one-carbon metabolism; tetrahydrofolate interconversion. Its function is as follows. Catalyzes the oxidation of 5,10-methylenetetrahydrofolate to 5,10-methenyltetrahydrofolate and then the hydrolysis of 5,10-methenyltetrahydrofolate to 10-formyltetrahydrofolate. This is Bifunctional protein FolD from Heliobacterium modesticaldum (strain ATCC 51547 / Ice1).